The following is a 329-amino-acid chain: Phosphate acetyltransferase (329 aa).

It belongs to the phosphate acetyltransferase and butyryltransferase family.

The protein resides in the cytoplasm. It catalyses the reaction acetyl-CoA + phosphate = acetyl phosphate + CoA. It participates in metabolic intermediate biosynthesis; acetyl-CoA biosynthesis; acetyl-CoA from acetate: step 2/2. In Staphylococcus epidermidis (strain ATCC 12228 / FDA PCI 1200), this protein is Phosphate acetyltransferase (pta).